The sequence spans 225 residues: UPF0758 protein Vapar_4033 (225 aa).

Residues 103 to 225 (VFDSPGTVKQ…SYSMAEKGLL (123 aa)) form the MPN domain. Positions 174, 176, and 187 each coordinate Zn(2+). Residues 174 to 187 (HNHPSGSIEPSRAD) carry the JAMM motif motif.

It belongs to the UPF0758 family.

In Variovorax paradoxus (strain S110), this protein is UPF0758 protein Vapar_4033.